The chain runs to 156 residues: Endoribonuclease YbeY (156 aa).

3 residues coordinate Zn(2+): histidine 111, histidine 115, and histidine 121.

It belongs to the endoribonuclease YbeY family. Requires Zn(2+) as cofactor.

It is found in the cytoplasm. Single strand-specific metallo-endoribonuclease involved in late-stage 70S ribosome quality control and in maturation of the 3' terminus of the 16S rRNA. The polypeptide is Endoribonuclease YbeY (Hahella chejuensis (strain KCTC 2396)).